The sequence spans 298 residues: GTP cyclohydrolase FolE2 (298 aa).

This sequence belongs to the GTP cyclohydrolase IV family.

It catalyses the reaction GTP + H2O = 7,8-dihydroneopterin 3'-triphosphate + formate + H(+). It functions in the pathway cofactor biosynthesis; 7,8-dihydroneopterin triphosphate biosynthesis; 7,8-dihydroneopterin triphosphate from GTP: step 1/1. Converts GTP to 7,8-dihydroneopterin triphosphate. This is GTP cyclohydrolase FolE2 from Xylella fastidiosa (strain M23).